Reading from the N-terminus, the 34-residue chain is Non-cysteinic peptide Bs 10 (34 aa).

Positions 1-34 (VTMGYIKDGDGKKIAKKKNKNGRKHVEIDLNKVG) are disordered. A compositionally biased stretch (basic residues) spans 14–23 (IAKKKNKNGR). Residues 24-34 (KHVEIDLNKVG) show a composition bias toward basic and acidic residues.

In terms of tissue distribution, expressed by the venom gland.

The protein resides in the secreted. The polypeptide is Non-cysteinic peptide Bs 10 (Hottentotta tamulus sindicus (Scorpion)).